Here is a 509-residue protein sequence, read N- to C-terminus: MQNFKELGISDKTVQTLEAMGFKEPTPIQKDSIPYALEGDDILGQAQTGTGKTGAFGIPLIEKVVGQQGVQSLILAPTRELAMQVAEQLREFSKGQKVQVVTVFGGMPIERQIKALKRGPQIVVGTPGRVIDHLNRRTLKTQGIHTLILDEADEMMNMGFIDDMRFIMDKIPAEQRQTMLFSATMPKAIQELVQQFMKAPKIIKTMNNEMSDPQIDEYYTIVKELEKFDTFTNFLDVHQPELAIVFGRTKRRVDELTSALLSKGYKAEGLHGDITQAKRLEVLKKFKNDQIDILVATDVAARGLDISGVSHVYNFDIPQDTESYTHRIGRTGRAGKEGIAVTFVNPIEMDYIRQIEDVNNRRMKALRPPHRKEVLKAREDDIKDRVQNWMSRENEPRLQRISSELLKEYDSTELVASLLQELVEANDEVEVQLTFEKPLARKNRSSKGGSRRSNHKRGNGKFDNKNRRSKGSKGQSSKKKNQKKFDRRDKQQKSGNQSLKGRTFADHQK.

The Q motif motif lies at 2–30 (QNFKELGISDKTVQTLEAMGFKEPTPIQK). The 171-residue stretch at 33–203 (IPYALEGDDI…QQFMKAPKII (171 aa)) folds into the Helicase ATP-binding domain. Residue 46-53 (AQTGTGKT) participates in ATP binding. A DEAD box motif is present at residues 150–153 (DEAD). A Helicase C-terminal domain is found at 214 to 375 (QIDEYYTIVK…LRPPHRKEVL (162 aa)). 2 stretches are compositionally biased toward basic residues: residues 440-459 (ARKN…KRGN) and 467-482 (RRSK…KKNQ). Positions 440–509 (ARKNRSSKGG…KGRTFADHQK (70 aa)) are disordered. The span at 483–492 (KKFDRRDKQQ) shows a compositional bias: basic and acidic residues.

The protein belongs to the DEAD box helicase family. CshA subfamily. As to quaternary structure, oligomerizes, may be a member of the RNA degradosome.

Its subcellular location is the cytoplasm. The enzyme catalyses ATP + H2O = ADP + phosphate + H(+). Functionally, DEAD-box RNA helicase possibly involved in RNA degradation. Unwinds dsRNA in both 5'- and 3'-directions, has RNA-dependent ATPase activity. The polypeptide is DEAD-box ATP-dependent RNA helicase CshA (Staphylococcus epidermidis (strain ATCC 35984 / DSM 28319 / BCRC 17069 / CCUG 31568 / BM 3577 / RP62A)).